Reading from the N-terminus, the 345-residue chain is Protein RecA (345 aa).

Residue 65-72 (GPESSGKT) coordinates ATP.

The protein belongs to the RecA family.

The protein localises to the cytoplasm. Its function is as follows. Can catalyze the hydrolysis of ATP in the presence of single-stranded DNA, the ATP-dependent uptake of single-stranded DNA by duplex DNA, and the ATP-dependent hybridization of homologous single-stranded DNAs. It interacts with LexA causing its activation and leading to its autocatalytic cleavage. This chain is Protein RecA, found in Hahella chejuensis (strain KCTC 2396).